Reading from the N-terminus, the 193-residue chain is Ribosomal RNA small subunit methyltransferase G (193 aa).

S-adenosyl-L-methionine-binding positions include Gly61, Leu66, Ile112–Glu113, and Arg126.

Belongs to the methyltransferase superfamily. RNA methyltransferase RsmG family.

Its subcellular location is the cytoplasm. The catalysed reaction is guanosine(527) in 16S rRNA + S-adenosyl-L-methionine = N(7)-methylguanosine(527) in 16S rRNA + S-adenosyl-L-homocysteine. Its function is as follows. Specifically methylates the N7 position of guanine in position 527 of 16S rRNA. In Paracoccus denitrificans (strain Pd 1222), this protein is Ribosomal RNA small subunit methyltransferase G.